The following is a 573-amino-acid chain: DEAD-box ATP-dependent RNA helicase 47B (573 aa).

A Q motif motif is present at residues 131 to 159 (KSFEELGLPPLLIDRLNKEGLSTPTEVQS). The region spanning 162-362 (IPIISQKHDA…RSWGHDPVLV (201 aa)) is the Helicase ATP-binding domain. 175–182 (SYTGSGKT) contacts ATP. The short motif at 293–296 (DEVD) is the DEAD box element. The Helicase C-terminal domain maps to 421 to 565 (TLRRCIHALE…PCEFTEGKLL (145 aa)).

Belongs to the DEAD box helicase family.

It carries out the reaction ATP + H2O = ADP + phosphate + H(+). The chain is DEAD-box ATP-dependent RNA helicase 47B from Oryza sativa subsp. japonica (Rice).